We begin with the raw amino-acid sequence, 289 residues long: Probable prolyl 4-hydroxylase 10 (289 aa).

A helical; Signal-anchor for type II membrane protein membrane pass occupies residues 20-40 (LVFAVLIMSTFVILILLAFGI). The Lumenal segment spans residues 41–289 (LSVPSNNAGS…KWLRVHEYKV (249 aa)). The 124-residue stretch at 161 to 284 (HGEGLQVLHY…KWSSTKWLRV (124 aa)) folds into the Fe2OG dioxygenase domain. Fe cation contacts are provided by histidine 179 and aspartate 181. Residue asparagine 220 is glycosylated (N-linked (GlcNAc...) asparagine). Histidine 265 is a Fe cation binding site. Lysine 275 contributes to the 2-oxoglutarate binding site.

This sequence belongs to the P4HA family. Fe(2+) is required as a cofactor. The cofactor is L-ascorbate.

Its subcellular location is the endoplasmic reticulum membrane. It catalyses the reaction L-prolyl-[collagen] + 2-oxoglutarate + O2 = trans-4-hydroxy-L-prolyl-[collagen] + succinate + CO2. Catalyzes the post-translational formation of 4-hydroxyproline in -Xaa-Pro-Gly- sequences in proline-rich peptide sequences of plant glycoproteins and other proteins. Hydroxyprolines are important constituent of many plant cell wall glycoproteins such as extensins, hydroxyproline-rich glycoproteins, lectins and arabinogalactan proteins. This is Probable prolyl 4-hydroxylase 10 from Arabidopsis thaliana (Mouse-ear cress).